A 381-amino-acid chain; its full sequence is Flagellar P-ring protein (381 aa).

A signal peptide spans 1 to 33; sequence MQFFNTLHPTRPHWLLAALCLIASLLGAGTAQA.

This sequence belongs to the FlgI family. As to quaternary structure, the basal body constitutes a major portion of the flagellar organelle and consists of four rings (L,P,S, and M) mounted on a central rod.

It localises to the periplasm. The protein resides in the bacterial flagellum basal body. Assembles around the rod to form the L-ring and probably protects the motor/basal body from shearing forces during rotation. This Albidiferax ferrireducens (strain ATCC BAA-621 / DSM 15236 / T118) (Rhodoferax ferrireducens) protein is Flagellar P-ring protein.